The primary structure comprises 328 residues: Acyl-CoA wax alcohol acyltransferase 1 (328 aa).

2 helical membrane-spanning segments follow: residues serine 12 to leucine 32 and valine 34 to phenylalanine 53.

This sequence belongs to the diacylglycerol acyltransferase family. Predominantly expressed in skin, where it is limited to the sebaceous gland. Expressed in more mature, centrally located cells just before their rupture and sebum release. Also expressed in all tissues except spleen. Expressed at higher level in thymus, prostate and testis.

It is found in the endoplasmic reticulum membrane. The enzyme catalyses a long chain fatty alcohol + a fatty acyl-CoA = a wax ester + CoA. It catalyses the reaction 1,2-di-(9Z-octadecenoyl)-sn-glycerol + (9Z)-octadecenoyl-CoA = 1,2,3-tri-(9Z-octadecenoyl)-glycerol + CoA. It carries out the reaction hexadecan-1-ol + (9Z)-octadecenoyl-CoA = hexadecanyl (9Z)-octadecenoate + CoA. The catalysed reaction is decan-1-ol + (9Z)-octadecenoyl-CoA = 1-O-decyl-(9Z)-octadecenoate + CoA. The enzyme catalyses (9Z)-hexadecen-1-ol + (9Z)-octadecenoyl-CoA = 1-O-(9Z)-hexadecenyl (9Z)-octadecenoate + CoA. It catalyses the reaction octadecan-1-ol + (9Z)-octadecenoyl-CoA = 1-O-octadecyl (9Z)-octadecenoate + CoA. It carries out the reaction (9Z)-octadecen-1-ol + (9Z)-octadecenoyl-CoA = 1-O-(9Z)-octadecenyl (9Z)-octadecenoate + CoA. The catalysed reaction is hexadecan-1-ol + hexadecanoyl-CoA = hexadecanyl hexadecanoate + CoA. The enzyme catalyses hexadecan-1-ol + (9Z)-hexadecenoyl-CoA = 1-O-hexadecyl (9Z)-hexadecenoate + CoA. It catalyses the reaction hexadecan-1-ol + octadecanoyl-CoA = hexadecanyl octadecanoate + CoA. It carries out the reaction eicosan-1-ol + (9Z)-octadecenoyl-CoA = 1-O-eicosanyl (9Z)-octadecenoate + CoA. Acyltransferase that catalyzes the formation of ester bonds between fatty alcohols and fatty acyl-CoAs to form wax monoesters. Shows a strong preference for decyl alcohol (C10), with less activity towards C16 and C18 alcohols. Shows a strong preference for saturated acyl-CoAs. In Homo sapiens (Human), this protein is Acyl-CoA wax alcohol acyltransferase 1 (AWAT1).